The sequence spans 521 residues: Cytokinin dehydrogenase 9 (521 aa).

The N-terminal stretch at 1–22 is a signal peptide; it reads MRPSLLQYLKLLLLLALGGVTT. Asn57 is a glycosylation site (N-linked (GlcNAc...) asparagine). An FAD-binding PCMH-type domain is found at 59–237; sequence SSFPPVAVLH…TRARIPLEPA (179 aa). Ala95, Gly97, and Gly99 together coordinate FAD. At His100 the chain carries Pros-8alpha-FAD histidine. 7 residues coordinate FAD: Ser101, Gln105, Asp161, Thr166, Ser172, Val176, and Ile227. 3 N-linked (GlcNAc...) asparagine glycosylation sites follow: Asn278, Asn412, and Asn418. Tyr469 contacts FAD. N-linked (GlcNAc...) asparagine glycosylation occurs at Asn472. Gln507 contributes to the FAD binding site.

Belongs to the oxygen-dependent FAD-linked oxidoreductase family. As to quaternary structure, monomer. It depends on FAD as a cofactor. Expressed in inflorescence meristems.

It localises to the secreted. Its subcellular location is the extracellular space. It is found in the cytoplasm. The protein localises to the cytosol. The protein resides in the nucleus. The enzyme catalyses N(6)-dimethylallyladenine + A + H2O = 3-methyl-2-butenal + adenine + AH2. Catalyzes the oxidation of cytokinins, a family of N(6)-substituted adenine derivatives that are plant hormones, where the substituent is an isopentenyl group. Possesses cytokinin oxidase activity toward trans-zeatin (tZ) and N6-(2-isopentenyl)adenine (2iP) in vitro. Functions as a primary strigolactone-responsive gene to regulate rice tillering, plant height, and panicle size, likely via a secondary response gene, RR5, which encodes a cytokinin-inducible rice type-A response regulator that seems to act as negative regulator of the cytokinin signaling. The polypeptide is Cytokinin dehydrogenase 9 (Oryza sativa subsp. japonica (Rice)).